Here is a 751-residue protein sequence, read N- to C-terminus: Protein WEAK CHLOROPLAST MOVEMENT UNDER BLUE LIGHT-like 3 (751 aa).

Ser113 is modified (phosphoserine). Coiled-coil stretches lie at residues 165–558 and 588–647; these read ERRK…ALQE and QALE…KARD. Basic and acidic residues-rich tracts occupy residues 455–467 and 625–689; these read RERQ…KQKE and NREM…RNKE. Disordered regions lie at residues 455 to 479 and 625 to 751; these read RERQ…DKDA and NREM…HSHK. Residues 704 to 723 show a composition bias toward low complexity; that stretch reads GSSSNNTGGSTTTNNNNLTP.

This sequence belongs to the WEB family.

The sequence is that of Protein WEAK CHLOROPLAST MOVEMENT UNDER BLUE LIGHT-like 3 (WEL3) from Arabidopsis thaliana (Mouse-ear cress).